We begin with the raw amino-acid sequence, 475 residues long: uncharacterized protein (475 aa).

4Fe-4S ferredoxin-type domains are found at residues 303-333 (ASEF…GHGY) and 352-381 (YKDF…LSKL). [4Fe-4S] cluster is bound by residues C312, C315, C318, C322, C362, C365, C368, and C372.

Belongs to the LutB/YkgF family.

This is an uncharacterized protein from Escherichia coli (strain K12).